We begin with the raw amino-acid sequence, 99 residues long: Putative membrane protein insertion efficiency factor (99 aa).

The protein belongs to the UPF0161 family.

Its subcellular location is the cell inner membrane. Could be involved in insertion of integral membrane proteins into the membrane. This is Putative membrane protein insertion efficiency factor from Salinibacter ruber (strain DSM 13855 / M31).